The sequence spans 154 residues: MGAQSHSLEITSSVSAEKIFSGIVLDVDTVIPKAAPGAYKSVEVKGDGGAGTVRIITLPEGSPITSMTVRTDAVNKEALTYDSTVIDGDILLGFIESIETHLVVVPTADGGSITKTTAIFHTKGDAVVPEENIKFADAQNTALFKAIEAYLIAN.

Belongs to the BetVI family. In terms of assembly, homodimer.

The polypeptide is Major allergen Dau c 1 (Daucus carota (Wild carrot)).